A 680-amino-acid polypeptide reads, in one-letter code: Extracellular matrix protein 2 (680 aa).

A signal peptide spans 1–20 (MKFSSLYCFLLLLIFQTDFG). A VWFC domain is found at 100–157 (GHCLANGMIMYNKAVWSPEPCTTCLCLNGKVLCDETKCHPQMCPQTIIPEGECCPVCS). A compositionally biased stretch (acidic residues) spans 189–198 (QLEEDEEEVK). Residues 189–293 (QLEEDEEEVK…RLPIPATPRG (105 aa)) are disordered. A compositionally biased stretch (basic and acidic residues) spans 223-238 (QSREGKAQRPEEEGRQ). Acidic residues predominate over residues 249–272 (NEEDDDEEEEDDDDEEEDDDDEDE). A Cell attachment site motif is present at residues 275-277 (RGD). The LRRNT domain occupies 288–325 (PATPRGIPSLPSMCSLSYKTISCISADLTQIPPLTAPE). 13 LRR repeats span residues 349-369 (NLERLDLSKNNITSSGIGPKA), 375-396 (NLMRLNMDGNNLVTIPSELPST), 397-417 (LEELKINENKLQVIDEESLSD), 420-440 (QLVTLELEGNNLSETNVNSLA), 446-466 (SLSYLRLGRNKFRIIPQGLPA), 467-488 (SIEELYLENNQIEEITEISFNH), 491-511 (KINVIGLRYNKIEENRIAPLA), 517-538 (NLESIDLSYNKLYHVPSYLPKS), 539-559 (LVHLVLIGNQIERIPGYVFGH), 563-583 (GLEYLYLSFNKLVDDGIDRVS), 590-611 (SLRELFLDHNELKSIPPGVQEM), 613-634 (ALHFLRLNNNKIRNILPEQICN), and 642-665 (NLQHLHLENNYIKTREIPSYAFSC). A glycan (N-linked (GlcNAc...) asparagine) is linked at N359. N430 carries an N-linked (GlcNAc...) asparagine glycan. N487 carries N-linked (GlcNAc...) asparagine glycosylation.

Belongs to the small leucine-rich proteoglycan (SLRP) family. SLRP class I subfamily. Interacts with numerous extracellular matrix proteins. Interacts with MSL1 and RASSF1.

The protein resides in the secreted. It localises to the extracellular space. Its subcellular location is the extracellular matrix. Functionally, promotes matrix assembly and cell adhesiveness. The chain is Extracellular matrix protein 2 (ECM2) from Bos taurus (Bovine).